The sequence spans 198 residues: Na(+)-translocating NADH-quinone reductase subunit E (198 aa).

The next 6 membrane-spanning stretches (helical) occupy residues Ser11–Val31, Phe39–Val59, Phe77–Ile97, Gly110–Val130, Val140–Ile160, and Leu176–Val196.

It belongs to the NqrDE/RnfAE family. Composed of six subunits; NqrA, NqrB, NqrC, NqrD, NqrE and NqrF.

Its subcellular location is the cell inner membrane. The enzyme catalyses a ubiquinone + n Na(+)(in) + NADH + H(+) = a ubiquinol + n Na(+)(out) + NAD(+). Functionally, NQR complex catalyzes the reduction of ubiquinone-1 to ubiquinol by two successive reactions, coupled with the transport of Na(+) ions from the cytoplasm to the periplasm. NqrA to NqrE are probably involved in the second step, the conversion of ubisemiquinone to ubiquinol. The sequence is that of Na(+)-translocating NADH-quinone reductase subunit E from Aliivibrio fischeri (strain ATCC 700601 / ES114) (Vibrio fischeri).